A 340-amino-acid chain; its full sequence is MAGPQDRPRGRGPSSGRPQRPVGGRSQRDRDRRVLGQNFLRDPATIRRIADAADVDPDGLVVEAGPGEGLLTRELARRAGRVRTYELDQRLARRLSTDLAQETSIEVVHADFLTAPHPEEPFQFVGAIPYGITSAIVDWCLTAPTLTSATLVTQQEFARKRTGDYGRWTALTVTTWPTFEWQYVAKVDRTLFTPVPRVHSAIMRLRRRPQPLLRDAAARSRFADMVEIGFVGKGGSLYRSLTREWPRSKVDSAFARADVHHDEIVAFVHPDQWITLFQLLDGSRGGAARGPGDQRGRRGRPGGGPRPDGRAGGGPRRDAGGRRTGDGRGGRPRPPRGGQA.

Residues 1 to 25 (MAGPQDRPRGRGPSSGRPQRPVGGR) are compositionally biased toward low complexity. The interval 1–37 (MAGPQDRPRGRGPSSGRPQRPVGGRSQRDRDRRVLGQ) is disordered. Residues Asn38, Leu40, Gly65, Glu86, Asp111, and Ala127 each contribute to the S-adenosyl-L-methionine site. A disordered region spans residues 284-340 (RGGAARGPGDQRGRRGRPGGGPRPDGRAGGGPRRDAGGRRTGDGRGGRPRPPRGGQA). The span at 301-314 (PGGGPRPDGRAGGG) shows a compositional bias: gly residues. A compositionally biased stretch (basic and acidic residues) spans 315–329 (PRRDAGGRRTGDGRG).

Belongs to the class I-like SAM-binding methyltransferase superfamily. rRNA adenine N(6)-methyltransferase family.

In terms of biological role, involved in erythromycin resistance. In Aeromicrobium erythreum (strain ATCC 51598 / DSM 8599 / JCM 8359 / NBRC 15406 / NRRL B-3381), this protein is rRNA adenine N-6-methyltransferase (ermA).